A 281-amino-acid polypeptide reads, in one-letter code: Bifunctional protein FolD (281 aa).

NADP(+) contacts are provided by residues glycine 164–serine 166 and serine 189.

It belongs to the tetrahydrofolate dehydrogenase/cyclohydrolase family. Homodimer.

The enzyme catalyses (6R)-5,10-methylene-5,6,7,8-tetrahydrofolate + NADP(+) = (6R)-5,10-methenyltetrahydrofolate + NADPH. It catalyses the reaction (6R)-5,10-methenyltetrahydrofolate + H2O = (6R)-10-formyltetrahydrofolate + H(+). It participates in one-carbon metabolism; tetrahydrofolate interconversion. In terms of biological role, catalyzes the oxidation of 5,10-methylenetetrahydrofolate to 5,10-methenyltetrahydrofolate and then the hydrolysis of 5,10-methenyltetrahydrofolate to 10-formyltetrahydrofolate. The sequence is that of Bifunctional protein FolD from Enterococcus faecalis (strain ATCC 700802 / V583).